A 444-amino-acid chain; its full sequence is Methylenetetrahydrofolate--tRNA-(uracil-5-)-methyltransferase TrmFO (444 aa).

Residue 9 to 14 participates in FAD binding; the sequence is GAGMAG.

Belongs to the MnmG family. TrmFO subfamily. The cofactor is FAD.

Its subcellular location is the cytoplasm. The catalysed reaction is uridine(54) in tRNA + (6R)-5,10-methylene-5,6,7,8-tetrahydrofolate + NADH + H(+) = 5-methyluridine(54) in tRNA + (6S)-5,6,7,8-tetrahydrofolate + NAD(+). The enzyme catalyses uridine(54) in tRNA + (6R)-5,10-methylene-5,6,7,8-tetrahydrofolate + NADPH + H(+) = 5-methyluridine(54) in tRNA + (6S)-5,6,7,8-tetrahydrofolate + NADP(+). Its function is as follows. Catalyzes the folate-dependent formation of 5-methyl-uridine at position 54 (M-5-U54) in all tRNAs. This chain is Methylenetetrahydrofolate--tRNA-(uracil-5-)-methyltransferase TrmFO, found in Cereibacter sphaeroides (strain KD131 / KCTC 12085) (Rhodobacter sphaeroides).